The sequence spans 595 residues: Sulfite reductase [NADPH] flavoprotein alpha-component (595 aa).

Positions 59–197 (ITVLSASQTG…KADIWRREIV (139 aa)) constitute a Flavodoxin-like domain. Residues 65-70 (SQTGNA), 112-115 (STQG), and 148-157 (LGDSSYTYFA) contribute to the FMN site. The FAD-binding FR-type domain occupies 230-444 (EEPFTAHLVV…IEHNDNFRLP (215 aa)). FAD is bound by residues Thr318, Phe352, 382-385 (RLYS), 400-402 (TVS), Tyr406, and 415-418 (GGAS). NADP(+) contacts are provided by residues 515–516 (SQ), 521–525 (KIYVQ), and Asp557. FAD is bound at residue Tyr595.

Belongs to the NADPH-dependent sulphite reductase flavoprotein subunit CysJ family. The protein in the N-terminal section; belongs to the flavodoxin family. It in the C-terminal section; belongs to the flavoprotein pyridine nucleotide cytochrome reductase family. In terms of assembly, alpha(8)-beta(8). The alpha component is a flavoprotein, the beta component is a hemoprotein. Requires FAD as cofactor. It depends on FMN as a cofactor.

It carries out the reaction hydrogen sulfide + 3 NADP(+) + 3 H2O = sulfite + 3 NADPH + 4 H(+). It functions in the pathway sulfur metabolism; hydrogen sulfide biosynthesis; hydrogen sulfide from sulfite (NADPH route): step 1/1. Its function is as follows. Component of the sulfite reductase complex that catalyzes the 6-electron reduction of sulfite to sulfide. This is one of several activities required for the biosynthesis of L-cysteine from sulfate. The flavoprotein component catalyzes the electron flow from NADPH -&gt; FAD -&gt; FMN to the hemoprotein component. The sequence is that of Sulfite reductase [NADPH] flavoprotein alpha-component from Baumannia cicadellinicola subsp. Homalodisca coagulata.